Consider the following 44-residue polypeptide: QKLCERPSGTWSGVCGNNNACKNQCINLEKARHGSCNYVFPAHK.

Glutamine 1 bears the Pyrrolidone carboxylic acid mark. Cysteine 15 and cysteine 36 are oxidised to a cystine.

Belongs to the DEFL family. In terms of assembly, forms oligomers in its native state.

It localises to the secreted. Possesses antifungal activity sensitive to inorganic cations. The sequence is that of Defensin-like protein 1 (AFP1) from Brassica napus (Rape).